The chain runs to 406 residues: Phosphopentomutase (406 aa).

Asp-10, Asp-305, His-310, Asp-346, His-347, and His-358 together coordinate Mn(2+).

Belongs to the phosphopentomutase family. The cofactor is Mn(2+).

The protein resides in the cytoplasm. The catalysed reaction is 2-deoxy-alpha-D-ribose 1-phosphate = 2-deoxy-D-ribose 5-phosphate. It catalyses the reaction alpha-D-ribose 1-phosphate = D-ribose 5-phosphate. The protein operates within carbohydrate degradation; 2-deoxy-D-ribose 1-phosphate degradation; D-glyceraldehyde 3-phosphate and acetaldehyde from 2-deoxy-alpha-D-ribose 1-phosphate: step 1/2. Functionally, isomerase that catalyzes the conversion of deoxy-ribose 1-phosphate (dRib-1-P) and ribose 1-phosphate (Rib-1-P) to deoxy-ribose 5-phosphate (dRib-5-P) and ribose 5-phosphate (Rib-5-P), respectively. The polypeptide is Phosphopentomutase (Vibrio parahaemolyticus serotype O3:K6 (strain RIMD 2210633)).